We begin with the raw amino-acid sequence, 205 residues long: Ribosomal RNA small subunit methyltransferase G (205 aa).

S-adenosyl-L-methionine is bound by residues Gly73, Leu78, 124 to 125 (VE), and Arg138.

The protein belongs to the methyltransferase superfamily. RNA methyltransferase RsmG family.

The protein resides in the cytoplasm. It carries out the reaction guanosine(527) in 16S rRNA + S-adenosyl-L-methionine = N(7)-methylguanosine(527) in 16S rRNA + S-adenosyl-L-homocysteine. In terms of biological role, specifically methylates the N7 position of guanine in position 527 of 16S rRNA. This Actinobacillus pleuropneumoniae serotype 7 (strain AP76) protein is Ribosomal RNA small subunit methyltransferase G.